Here is a 278-residue protein sequence, read N- to C-terminus: 3-methyl-2-oxobutanoate hydroxymethyltransferase (278 aa).

Residues Asp52 and Asp91 each contribute to the Mg(2+) site. 3-methyl-2-oxobutanoate is bound by residues 52–53, Asp91, and Lys121; that span reads DS. Glu123 is a Mg(2+) binding site. Glu190 (proton acceptor) is an active-site residue.

Belongs to the PanB family. In terms of assembly, homodecamer; pentamer of dimers. It depends on Mg(2+) as a cofactor.

The protein resides in the cytoplasm. The enzyme catalyses 3-methyl-2-oxobutanoate + (6R)-5,10-methylene-5,6,7,8-tetrahydrofolate + H2O = 2-dehydropantoate + (6S)-5,6,7,8-tetrahydrofolate. The protein operates within cofactor biosynthesis; (R)-pantothenate biosynthesis; (R)-pantoate from 3-methyl-2-oxobutanoate: step 1/2. Its function is as follows. Catalyzes the reversible reaction in which hydroxymethyl group from 5,10-methylenetetrahydrofolate is transferred onto alpha-ketoisovalerate to form ketopantoate. This chain is 3-methyl-2-oxobutanoate hydroxymethyltransferase, found in Rhodospirillum rubrum (strain ATCC 11170 / ATH 1.1.1 / DSM 467 / LMG 4362 / NCIMB 8255 / S1).